The following is a 271-amino-acid chain: MPELPEVEVTRQGIAPFLVEQTVVDLVIRNGSLRWPVPDIAKQIIGQVIRQVRRRAKYLLIDTDAGTSIVHLGMSGSLRILPHDTPVEKHDHIDLVLANGRILRFNDPRRFGAWLWCELPEEAHPLLAKLGPEPLTQAFNVAQLAAALAGKKKAIKLCLMDNHIVVGVGNIYANEALFAAGIHPEAEAGKIDIERLTVLVAEVKQILAHAIKQGGTTLKDFTNADGKPGYFAQKLHVYGRGGETCTSCGNLLSEIRLGQRTTVFCGICQTR.

Pro2 (schiff-base intermediate with DNA) is an active-site residue. Catalysis depends on Glu3, which acts as the Proton donor. The Proton donor; for beta-elimination activity role is filled by Lys57. DNA-binding residues include His90, Arg109, and Lys151. Residues 236–270 (HVYGRGGETCTSCGNLLSEIRLGQRTTVFCGICQT) form an FPG-type zinc finger. Arg260 serves as the catalytic Proton donor; for delta-elimination activity.

The protein belongs to the FPG family. Monomer. Zn(2+) serves as cofactor.

The catalysed reaction is Hydrolysis of DNA containing ring-opened 7-methylguanine residues, releasing 2,6-diamino-4-hydroxy-5-(N-methyl)formamidopyrimidine.. It carries out the reaction 2'-deoxyribonucleotide-(2'-deoxyribose 5'-phosphate)-2'-deoxyribonucleotide-DNA = a 3'-end 2'-deoxyribonucleotide-(2,3-dehydro-2,3-deoxyribose 5'-phosphate)-DNA + a 5'-end 5'-phospho-2'-deoxyribonucleoside-DNA + H(+). Functionally, involved in base excision repair of DNA damaged by oxidation or by mutagenic agents. Acts as a DNA glycosylase that recognizes and removes damaged bases. Has a preference for oxidized purines, such as 7,8-dihydro-8-oxoguanine (8-oxoG). Has AP (apurinic/apyrimidinic) lyase activity and introduces nicks in the DNA strand. Cleaves the DNA backbone by beta-delta elimination to generate a single-strand break at the site of the removed base with both 3'- and 5'-phosphates. This chain is Formamidopyrimidine-DNA glycosylase, found in Shewanella baltica (strain OS155 / ATCC BAA-1091).